The following is a 519-amino-acid chain: Maturase K (519 aa).

The protein belongs to the intron maturase 2 family. MatK subfamily.

Its subcellular location is the plastid. It localises to the chloroplast. Functionally, usually encoded in the trnK tRNA gene intron. Probably assists in splicing its own and other chloroplast group II introns. The polypeptide is Maturase K (Cycas panzhihuaensis (Dukou cycad)).